We begin with the raw amino-acid sequence, 241 residues long: DNA repair protein RecO (241 aa).

Belongs to the RecO family.

Its function is as follows. Involved in DNA repair and RecF pathway recombination. This chain is DNA repair protein RecO, found in Orientia tsutsugamushi (strain Ikeda) (Rickettsia tsutsugamushi).